The primary structure comprises 533 residues: Dipeptidase (533 aa).

Cysteine 3 is a catalytic residue.

It belongs to the peptidase C69 family.

The enzyme catalyses an L-aminoacyl-L-amino acid + H2O = 2 an L-alpha-amino acid. In terms of biological role, hydrolyzes a wide range of dipeptides. Highest activity against Ala-Gln. In Bifidobacterium longum (strain NCC 2705), this protein is Dipeptidase.